Reading from the N-terminus, the 665-residue chain is MKKPFYITTPIYYPSGKLHIGSAYTTIACDVLARYKRLMGHEVFYLTGLDEHGQKIQTKAKEAGITPQTYVDNMAKDVKALWQLLDISYDTFIRTTDDYHEEVVAAVFEKLLAQDDIYLGEYSGWYSVSDEEFFTESQLKEVFRDEDGQVIGGIAPSGHEVEWVSEESYFLRLSKYADRLVAFFKERPDFIQPDGRMNEMVKNFIEPGLEDLAVSRTTFTWGVPVPSDPKHVVYVWIDALLNYATALGYGQANHANFDKFWNGTVFHMVGKDILRFHSIYWPILLMMLDLPMPDRLIAHGWFVMKDGKMSKSKGNVVYPEMLVERFGLDPLRYYLMRSLPVGSDGTFTPEDYVGRINYELANDLGNLLNRTVAMINKYFDGTVPAYVDNGTAFDADLSQLIDAQLADYHKHMEAVDYPRALEAVWTIIARTNKYIDETAPWVLAKEDGDKAQLASVMAHLAASLRVVAHVIQPFMMETSAAIMAQLGLAPVSDLSTLALADFPANTKVVAKGTPIFPRLDMEAEIDYIKAQMGDSSAISQEKEWVPEEVALKSEKDVITFETFDAVEIRVAEVKEVSKVEGSEKLLRFRVDAGDGQDRQILSGIAKCYPNEQELVGKKLQIVANLKPRKMMKQYISQGMILSAEHGDQLTVLTVDPSVPNGSIIG.

The 'HIGH' region motif lies at 12–22 (YYPSGKLHIGS). Residues 308–312 (KMSKS) carry the 'KMSKS' region motif. Lysine 311 contributes to the ATP binding site. Residues 562-665 (TFDAVEIRVA…PSVPNGSIIG (104 aa)) form the tRNA-binding domain.

It belongs to the class-I aminoacyl-tRNA synthetase family. MetG type 2B subfamily. Homodimer.

It localises to the cytoplasm. The catalysed reaction is tRNA(Met) + L-methionine + ATP = L-methionyl-tRNA(Met) + AMP + diphosphate. Its function is as follows. Is required not only for elongation of protein synthesis but also for the initiation of all mRNA translation through initiator tRNA(fMet) aminoacylation. This Streptococcus pyogenes serotype M6 (strain ATCC BAA-946 / MGAS10394) protein is Methionine--tRNA ligase (metG).